We begin with the raw amino-acid sequence, 379 residues long: UDP-N-acetylglucosamine--N-acetylmuramyl-(pentapeptide) pyrophosphoryl-undecaprenol N-acetylglucosamine transferase (379 aa).

Residues 17–19 (TGG), asparagine 128, arginine 169, serine 197, and glutamine 298 each bind UDP-N-acetyl-alpha-D-glucosamine.

This sequence belongs to the glycosyltransferase 28 family. MurG subfamily.

It localises to the cell inner membrane. It catalyses the reaction di-trans,octa-cis-undecaprenyl diphospho-N-acetyl-alpha-D-muramoyl-L-alanyl-D-glutamyl-meso-2,6-diaminopimeloyl-D-alanyl-D-alanine + UDP-N-acetyl-alpha-D-glucosamine = di-trans,octa-cis-undecaprenyl diphospho-[N-acetyl-alpha-D-glucosaminyl-(1-&gt;4)]-N-acetyl-alpha-D-muramoyl-L-alanyl-D-glutamyl-meso-2,6-diaminopimeloyl-D-alanyl-D-alanine + UDP + H(+). The protein operates within cell wall biogenesis; peptidoglycan biosynthesis. In terms of biological role, cell wall formation. Catalyzes the transfer of a GlcNAc subunit on undecaprenyl-pyrophosphoryl-MurNAc-pentapeptide (lipid intermediate I) to form undecaprenyl-pyrophosphoryl-MurNAc-(pentapeptide)GlcNAc (lipid intermediate II). This chain is UDP-N-acetylglucosamine--N-acetylmuramyl-(pentapeptide) pyrophosphoryl-undecaprenol N-acetylglucosamine transferase, found in Brucella suis (strain ATCC 23445 / NCTC 10510).